Reading from the N-terminus, the 966-residue chain is Isoleucine--tRNA ligase (966 aa).

Positions 1 to 16 are enriched in basic and acidic residues; the sequence is MSDDKRAKSDKNEKNK. A disordered region spans residues 1 to 24; that stretch reads MSDDKRAKSDKNEKNKYPVNLLDT. The short motif at 69–79 is the 'HIGH' region element; that stretch reads PYANGDIHIGH. Glutamate 599 contributes to the L-isoleucyl-5'-AMP binding site. Positions 640 to 644 match the 'KMSKS' region motif; sequence KMSKS. Residue lysine 643 coordinates ATP. Zn(2+) is bound by residues cysteine 929, cysteine 932, cysteine 949, and cysteine 952.

It belongs to the class-I aminoacyl-tRNA synthetase family. IleS type 1 subfamily. In terms of assembly, monomer. Zn(2+) serves as cofactor.

The protein resides in the cytoplasm. The enzyme catalyses tRNA(Ile) + L-isoleucine + ATP = L-isoleucyl-tRNA(Ile) + AMP + diphosphate. Functionally, catalyzes the attachment of isoleucine to tRNA(Ile). As IleRS can inadvertently accommodate and process structurally similar amino acids such as valine, to avoid such errors it has two additional distinct tRNA(Ile)-dependent editing activities. One activity is designated as 'pretransfer' editing and involves the hydrolysis of activated Val-AMP. The other activity is designated 'posttransfer' editing and involves deacylation of mischarged Val-tRNA(Ile). This is Isoleucine--tRNA ligase from Cupriavidus taiwanensis (strain DSM 17343 / BCRC 17206 / CCUG 44338 / CIP 107171 / LMG 19424 / R1) (Ralstonia taiwanensis (strain LMG 19424)).